A 222-amino-acid polypeptide reads, in one-letter code: Peptidyl-prolyl cis-trans isomerase FKBP7 (222 aa).

The N-terminal stretch at 1–23 (MPKTMHFLFRFIVFFYLWGLFTA) is a signal peptide. A glycan (N-linked (GlcNAc...) asparagine) is linked at N45. A PPIase FKBP-type domain is found at 53 to 145 (GDLLNAHYDG…IFEIELYAVT (93 aa)). EF-hand domains are found at residues 145 to 180 (TKGP…EFEK) and 189 to 222 (YQDA…HDEL). Ca(2+) contacts are provided by D158, D160, D162, Q164, E169, D202, D204, D206, and E213. The Prevents secretion from ER motif lies at 219 to 222 (HDEL).

In terms of processing, glycosylated.

It localises to the endoplasmic reticulum lumen. The enzyme catalyses [protein]-peptidylproline (omega=180) = [protein]-peptidylproline (omega=0). In terms of biological role, PPIases accelerate the folding of proteins during protein synthesis. In Pongo abelii (Sumatran orangutan), this protein is Peptidyl-prolyl cis-trans isomerase FKBP7 (FKBP7).